Consider the following 322-residue polypeptide: MKKYKTGLVLLVIALALLVYFSPWFFLHIASWQKEFNQLISENLHQIQNNSIKAGTTLIFASFVYGVLHALGPGHGKFIIASYLSTHESQLKQSTILSLLSSLMQGIVAITATTLLVVVLNLSSRYFKLSQLWLERTALLLLVFLGCYWIWQGLRAYRKKAKLAIKSLNPLPLHEKSAVKNNRTFQPNTCSCGHQHLPSPTQTAQATNLKSQFLVILTIGMRPCSGAIFVLFLAYMLDLYSWGILAVLAMSFGTGLMLSAFAGIVRYARNTAIHLGHWYSSKNTKGKSESIVKLIAGGIMLFFALSLLYGTTISTGGSKILF.

6 consecutive transmembrane segments (helical) span residues 7–27 (GLVLLVIALALLVYFSPWFFL), 54–74 (AGTTLIFASFVYGVLHALGPG), 100–120 (LSSLMQGIVAITATTLLVVVL), 137–157 (TALLLLVFLGCYWIWQGLRAY), 228–248 (IFVLFLAYMLDLYSWGILAVL), and 294–314 (LIAGGIMLFFALSLLYGTTIS).

This sequence belongs to the NiCoT transporter (TC 2.A.52) family.

The protein localises to the cell membrane. Its function is as follows. Efflux system for nickel and cobalt. This chain is Putative nickel/cobalt efflux system HI_1248, found in Haemophilus influenzae (strain ATCC 51907 / DSM 11121 / KW20 / Rd).